A 62-amino-acid polypeptide reads, in one-letter code: MKASELRAKSVDELKTELLSLLKAQFGLRMQLATQQLAKTSELKKVRRDIARVRTILSEKAA.

It belongs to the universal ribosomal protein uL29 family.

This is Large ribosomal subunit protein uL29 from Laribacter hongkongensis (strain HLHK9).